We begin with the raw amino-acid sequence, 465 residues long: MSRPDRAINSEAGDWGYSEDAGERAWLLQSPSVDSVQPPSQSDDSRGGTSSLGAVFIVVNAALGAGLLNFPAAFNMAGGITAGVTLQMCMMAFIITGLVILAYCSQVSNESTYQEVVRAVCGKALGVICELAIAVYTFGTCIAFLIIIGDQLDKLIGAINNESEKEISLHWYTDRKFTITLTSVLIILPLSIPKEIGFQKYASTLSVIGTWYVTIIVIVKYIWPSKDVSPGIIPVRPASWTDVFNAMPTICFGFQCHVSSVPVFNSMKKPEIRPWWGVVTISMIICLFVYTGTGVCGFLSFGSSVSQDVLMSYPSDDVAVAIARAFIIICVVTSYPILHFCGRAVLEGLWLRFKGEEVETDVAKERRRRILQTLVWFCLTLILALFIPDIGRVISLIGGLAACFIFVFPGLCLIQAKLSEHDVRSNSWNAMVAYGVIMVTIGAFIFGQTTTNAIYKDIINNPNSP.

The next 11 membrane-spanning stretches (helical) occupy residues 54–74 (AVFI…PAAF), 82–102 (AGVT…VILA), 128–148 (ICEL…LIII), 177–197 (FTIT…KEIG), 204–224 (TLSV…YIWP), 244–264 (FNAM…VPVF), 275–295 (WWGV…GTGV), 318–338 (VAVA…YPIL), 370–390 (ILQT…IPDI), 394–414 (ISLI…LCLI), and 427–447 (SWNA…FIFG).

This sequence belongs to the amino acid/polyamine transporter 2 family.

The protein localises to the lysosome membrane. Its subcellular location is the cell projection. It is found in the axon. The catalysed reaction is L-asparagine(in) + Na(+)(in) = L-asparagine(out) + Na(+)(out). It catalyses the reaction L-glutamine(in) + Na(+)(in) = L-glutamine(out) + Na(+)(out). Symporter that selectively cotransports sodium ions and amino acids, such as L-glutamine and L-asparagine from the lysosome into the cytoplasm and may participates in mTORC1 activation. The transport activity requires an acidic lysosomal lumen. The sequence is that of Sodium-coupled neutral amino acid transporter 7 from Danio rerio (Zebrafish).